The following is a 241-amino-acid chain: DnaA regulatory inactivator Hda (241 aa).

It belongs to the DnaA family. HdA subfamily. As to quaternary structure, the active form seems to be an ADP-bound monomer. Forms the RIDA complex (regulatory inactivation of DnaA) of ATP-DnaA, ADP-Hda and the DNA-loaded beta sliding clamp (dnaN).

Mediates the interaction of DNA replication initiator protein DnaA with DNA polymerase subunit beta sliding clamp (dnaN). Stimulates hydrolysis of ATP-DnaA to ADP-DnaA, rendering DnaA inactive for reinitiation, a process called regulatory inhibition of DnaA or RIDA. In Citrobacter koseri (strain ATCC BAA-895 / CDC 4225-83 / SGSC4696), this protein is DnaA regulatory inactivator Hda.